Reading from the N-terminus, the 1574-residue chain is Disco-interacting protein 2 homolog B (1574 aa).

Ser-9, Ser-50, and Ser-53 each carry phosphoserine. The DMAP1-binding domain maps to 12–130 (AVAALPPEVR…PMPTKRRSTF (119 aa)). Residues 31–166 (LSEGDITQKG…AALSAALQQS (136 aa)) are disordered. A compositionally biased stretch (polar residues) spans 52–62 (YSPQTQETDSI). Low complexity predominate over residues 69-82 (QTPAPTAAQTSAPS). Thr-70 carries the post-translational modification Phosphothreonine. Residues 91 to 103 (GARDERYRSDIHT) are compositionally biased toward basic and acidic residues. Ser-99 carries the post-translational modification Phosphoserine. Thr-139 is modified (phosphothreonine). A phosphoserine mark is found at Ser-145, Ser-147, and Ser-152. A compositionally biased stretch (low complexity) spans 154 to 166 (RRQAALSAALQQS). Ser-177, Ser-192, and Ser-202 each carry phosphoserine. The segment at 178–200 (IQGSSTSSSASSTLSHGEVKGTS) is disordered. Low complexity predominate over residues 181–192 (SSTSSSASSTLS). The interval 217 to 244 (APPDVTATTSSSSSSLRPANIDLPPSGI) is disordered. At Ser-256 the chain carries Phosphoserine.

This sequence belongs to the DIP2 family. As to quaternary structure, interacts with alpha-tubulin. Highly expressed in brain and spinal cord (at protein level). In brain, expression is detected in the main olfactory bulb, cortex, lateral ventricle, cornu ammonis 1, cornu ammonis 3, dentate gyrus, striatum, cerebellar cortex and medial habenula. Expressed primarily in neurons including excitatory pyramidal neurons and inhibitory interneurons.

The protein resides in the cell projection. It is found in the dendrite. The protein localises to the axon. It localises to the perikaryon. In terms of biological role, negatively regulates axonal outgrowth and is essential for normal synaptic transmission. Not required for regulation of axon polarity. Promotes acetylation of alpha-tubulin. The protein is Disco-interacting protein 2 homolog B (Dip2b) of Mus musculus (Mouse).